The chain runs to 906 residues: Protein translocase subunit SecA (906 aa).

ATP-binding positions include Gln86, Gly104–Thr108, and Asp499. The interval Pro863 to Ser885 is disordered. Cys890, Cys892, Cys901, and His902 together coordinate Zn(2+).

This sequence belongs to the SecA family. As to quaternary structure, monomer and homodimer. Part of the essential Sec protein translocation apparatus which comprises SecA, SecYEG and auxiliary proteins SecDF-YajC and YidC. The cofactor is Zn(2+).

Its subcellular location is the cell inner membrane. The protein resides in the cytoplasm. It catalyses the reaction ATP + H2O + cellular proteinSide 1 = ADP + phosphate + cellular proteinSide 2.. Its function is as follows. Part of the Sec protein translocase complex. Interacts with the SecYEG preprotein conducting channel. Has a central role in coupling the hydrolysis of ATP to the transfer of proteins into and across the cell membrane, serving both as a receptor for the preprotein-SecB complex and as an ATP-driven molecular motor driving the stepwise translocation of polypeptide chains across the membrane. This Rickettsia akari (strain Hartford) protein is Protein translocase subunit SecA.